The sequence spans 342 residues: Central glycolytic genes regulator (342 aa).

Positions 37–56 form a DNA-binding region, H-T-H motif; the sequence is RRNLAVSLGLTERVLRSEVT.

This sequence belongs to the SorC transcriptional regulatory family. Homotetramer.

Its function is as follows. In the absence of glucose, represses the transcription of the gapA operon, which encodes five key glycolytic enzymes. The protein is Central glycolytic genes regulator (cggR) of Priestia megaterium (strain DSM 319 / IMG 1521) (Bacillus megaterium).